Consider the following 179-residue polypeptide: MKSTAISRRYAKSLVNLAAPDGQLESTYTQLEQIQQAFACEPRLYKLLASPTLAADKIAGLLEGIGNYLQLSTTLRNLLGLLQQRQRLEYFDALVADYRELADVQLGLVRARVCSAAPLDAEVQQAISAQLQKRYGKQAVLELAVEPELLGGVRIEVAGQVLDGTIRSGLRRMAGYLNS.

Belongs to the ATPase delta chain family. As to quaternary structure, F-type ATPases have 2 components, F(1) - the catalytic core - and F(0) - the membrane proton channel. F(1) has five subunits: alpha(3), beta(3), gamma(1), delta(1), epsilon(1). F(0) has three main subunits: a(1), b(2) and c(10-14). The alpha and beta chains form an alternating ring which encloses part of the gamma chain. F(1) is attached to F(0) by a central stalk formed by the gamma and epsilon chains, while a peripheral stalk is formed by the delta and b chains.

The protein localises to the cell inner membrane. Its function is as follows. F(1)F(0) ATP synthase produces ATP from ADP in the presence of a proton or sodium gradient. F-type ATPases consist of two structural domains, F(1) containing the extramembraneous catalytic core and F(0) containing the membrane proton channel, linked together by a central stalk and a peripheral stalk. During catalysis, ATP synthesis in the catalytic domain of F(1) is coupled via a rotary mechanism of the central stalk subunits to proton translocation. This protein is part of the stalk that links CF(0) to CF(1). It either transmits conformational changes from CF(0) to CF(1) or is implicated in proton conduction. This Syntrophotalea carbinolica (strain DSM 2380 / NBRC 103641 / GraBd1) (Pelobacter carbinolicus) protein is ATP synthase subunit delta 2.